We begin with the raw amino-acid sequence, 326 residues long: Tetraacyldisaccharide 4'-kinase (326 aa).

54–61 (SVGGTGKT) lines the ATP pocket.

The protein belongs to the LpxK family.

The catalysed reaction is a lipid A disaccharide + ATP = a lipid IVA + ADP + H(+). Its pathway is glycolipid biosynthesis; lipid IV(A) biosynthesis; lipid IV(A) from (3R)-3-hydroxytetradecanoyl-[acyl-carrier-protein] and UDP-N-acetyl-alpha-D-glucosamine: step 6/6. Functionally, transfers the gamma-phosphate of ATP to the 4'-position of a tetraacyldisaccharide 1-phosphate intermediate (termed DS-1-P) to form tetraacyldisaccharide 1,4'-bis-phosphate (lipid IVA). This Rickettsia canadensis (strain McKiel) protein is Tetraacyldisaccharide 4'-kinase.